A 607-amino-acid polypeptide reads, in one-letter code: Polypeptide N-acetylgalactosaminyltransferase 18 (607 aa).

At 1-12 (MVCTRKTKTLVS) the chain is on the cytoplasmic side. The helical; Signal-anchor for type II membrane protein transmembrane segment at 13 to 35 (TCVILSGMTNIICLLYVGWVTNY) threads the bilayer. Residues 36-607 (IASVYVRGQE…ITNVLRSLAS (572 aa)) lie on the Lumenal side of the membrane. 5 cysteine pairs are disulfide-bonded: Cys-144/Cys-377, Cys-368/Cys-447, Cys-482/Cys-498, Cys-530/Cys-543, and Cys-571/Cys-591. Asn-146 carries N-linked (GlcNAc...) asparagine glycosylation. A catalytic subdomain A region spans residues 153–267 (LPEVSIVFIF…VGWAEPVLTR (115 aa)). Asp-194 contacts substrate. An N-linked (GlcNAc...) asparagine glycan is attached at Asn-195. 2 residues coordinate Mn(2+): Asp-251 and His-253. N-linked (GlcNAc...) asparagine glycosylation is present at Asn-320. Positions 324-385 (PIRSPALIGC…PCSRIAHIER (62 aa)) are catalytic subdomain B. Position 382 (His-382) interacts with Mn(2+). The substrate site is built by Arg-385 and Tyr-390. The Ricin B-type lectin domain occupies 469–599 (AYGVLQNSLK…KCSGQHWSIT (131 aa)).

This sequence belongs to the glycosyltransferase 2 family. GalNAc-T subfamily. The cofactor is Mn(2+).

It is found in the golgi apparatus membrane. It catalyses the reaction L-seryl-[protein] + UDP-N-acetyl-alpha-D-galactosamine = a 3-O-[N-acetyl-alpha-D-galactosaminyl]-L-seryl-[protein] + UDP + H(+). It carries out the reaction L-threonyl-[protein] + UDP-N-acetyl-alpha-D-galactosamine = a 3-O-[N-acetyl-alpha-D-galactosaminyl]-L-threonyl-[protein] + UDP + H(+). The protein operates within protein modification; protein glycosylation. Functionally, catalyzes the initial reaction in O-linked oligosaccharide biosynthesis, the transfer of an N-acetyl-D-galactosamine (GalNAc) residue from UDP-GalNAc to a serine or threonine residue on the protein receptor. In Homo sapiens (Human), this protein is Polypeptide N-acetylgalactosaminyltransferase 18 (GALNT18).